We begin with the raw amino-acid sequence, 396 residues long: Ornithine aminotransferase 2 (396 aa).

The residue at position 255 (lysine 255) is an N6-(pyridoxal phosphate)lysine.

Belongs to the class-III pyridoxal-phosphate-dependent aminotransferase family. OAT subfamily. The cofactor is pyridoxal 5'-phosphate.

It localises to the cytoplasm. The catalysed reaction is a 2-oxocarboxylate + L-ornithine = L-glutamate 5-semialdehyde + an L-alpha-amino acid. It functions in the pathway amino-acid biosynthesis; L-proline biosynthesis; L-glutamate 5-semialdehyde from L-ornithine: step 1/1. Functionally, catalyzes the interconversion of ornithine to glutamate semialdehyde. The sequence is that of Ornithine aminotransferase 2 from Staphylococcus aureus (strain COL).